We begin with the raw amino-acid sequence, 473 residues long: RuvB-like helicase 2 (473 aa).

76 to 83 (GPPSTGKT) serves as a coordination point for ATP.

It belongs to the RuvB family. May form heterododecamers with RVB1. Component of the SWR1 chromatin remodeling complex, the INO80 chromatin remodeling complex, and of the R2TP complex.

It is found in the nucleus. It catalyses the reaction ATP + H2O = ADP + phosphate + H(+). Its function is as follows. DNA helicase which participates in several chromatin remodeling complexes, including the SWR1 and the INO80 complexes. The SWR1 complex mediates the ATP-dependent exchange of histone H2A for the H2A variant HZT1 leading to transcriptional regulation of selected genes by chromatin remodeling. The INO80 complex remodels chromatin by shifting nucleosomes and is involved in DNA repair. Also involved in pre-rRNA processing. The sequence is that of RuvB-like helicase 2 (RVB2) from Gibberella zeae (strain ATCC MYA-4620 / CBS 123657 / FGSC 9075 / NRRL 31084 / PH-1) (Wheat head blight fungus).